A 359-amino-acid chain; its full sequence is NADH-quinone oxidoreductase subunit H (359 aa).

8 helical membrane passes run 19–39, 94–114, 127–147, 166–186, 202–222, 266–286, 301–321, and 337–357; these read IGWF…FIAL, FLFV…FAVL, VGLF…LAAG, IVSY…LAGT, FMHW…IYFI, MFMV…SPLP, VWGA…QMWL, and CWKV…IWVI.

The protein belongs to the complex I subunit 1 family. In terms of assembly, NDH-1 is composed of 14 different subunits. Subunits NuoA, H, J, K, L, M, N constitute the membrane sector of the complex.

It localises to the cell inner membrane. The enzyme catalyses a quinone + NADH + 5 H(+)(in) = a quinol + NAD(+) + 4 H(+)(out). Its function is as follows. NDH-1 shuttles electrons from NADH, via FMN and iron-sulfur (Fe-S) centers, to quinones in the respiratory chain. The immediate electron acceptor for the enzyme in this species is believed to be ubiquinone. Couples the redox reaction to proton translocation (for every two electrons transferred, four hydrogen ions are translocated across the cytoplasmic membrane), and thus conserves the redox energy in a proton gradient. This subunit may bind ubiquinone. This is NADH-quinone oxidoreductase subunit H from Chlorobaculum parvum (strain DSM 263 / NCIMB 8327) (Chlorobium vibrioforme subsp. thiosulfatophilum).